The following is a 136-amino-acid chain: Small ribosomal subunit protein uS9 (136 aa).

Over residues 103–116 (PLKTEGHLSRDPRA) the composition is skewed to basic and acidic residues. Positions 103-136 (PLKTEGHLSRDPRAKERRKYGLKKARKAPQFSKR) are disordered. Positions 117–136 (KERRKYGLKKARKAPQFSKR) are enriched in basic residues.

It belongs to the universal ribosomal protein uS9 family.

The chain is Small ribosomal subunit protein uS9 (rpsI) from Prochlorococcus marinus (strain SARG / CCMP1375 / SS120).